Consider the following 526-residue polypeptide: GMP synthase [glutamine-hydrolyzing] (526 aa).

The Glutamine amidotransferase type-1 domain maps to 13-204 (TVLVVDFGAQ…LYRGAGLSPD (192 aa)). The active-site Nucleophile is Cys90. Residues His178 and Glu180 contribute to the active site. Residues 205–400 (WTTGNVIEEQ…LGLPDEIVQR (196 aa)) form the GMPS ATP-PPase domain. An ATP-binding site is contributed by 232 to 238 (SGGVDSA).

As to quaternary structure, homodimer.

The enzyme catalyses XMP + L-glutamine + ATP + H2O = GMP + L-glutamate + AMP + diphosphate + 2 H(+). It participates in purine metabolism; GMP biosynthesis; GMP from XMP (L-Gln route): step 1/1. Functionally, catalyzes the synthesis of GMP from XMP. In Streptomyces coelicolor (strain ATCC BAA-471 / A3(2) / M145), this protein is GMP synthase [glutamine-hydrolyzing] (guaA).